A 691-amino-acid polypeptide reads, in one-letter code: Histone-lysine N-methyltransferase Set8 (691 aa).

Residues 1-29 (MIMVRRRQRPAKEAASSSSGGASSGSGIP) form a disordered region. Residues 14 to 27 (AASSSSGGASSGSG) show a composition bias toward low complexity. Phosphoserine is present on residues Ser-195 and Ser-250. Phosphothreonine is present on Thr-252. Ser-281 is modified (phosphoserine). Disordered regions lie at residues 341–363 (TANT…HRIL), 382–401 (GSAD…TTTA), 407–437 (KSRR…QQQQ), and 464–516 (AEER…ATNG). Thr-344 is subject to Phosphothreonine. A phosphoserine mark is found at Ser-346, Ser-383, Ser-388, and Ser-392. 2 stretches are compositionally biased toward polar residues: residues 421–430 (YQPQLQKPPS) and 471–481 (NKAPATANSNK). Residues 555-676 (DGLQVRHFMG…PGEELTYDYG (122 aa)) enclose the SET domain. S-adenosyl-L-methionine-binding positions include 565–567 (KGR), Tyr-610, and 637–638 (NH).

It belongs to the class V-like SAM-binding methyltransferase superfamily. Histone-lysine methyltransferase family. PR/SET subfamily.

It is found in the nucleus. The protein localises to the chromosome. The catalysed reaction is L-lysyl(20)-[histone H4] + S-adenosyl-L-methionine = N(6)-methyl-L-lysyl(20)-[histone H4] + S-adenosyl-L-homocysteine + H(+). Its function is as follows. Histone methyltransferase that specifically monomethylates 'Lys-20' of histone H4. H4 'Lys-20' monomethylation is enriched during mitosis and represents a specific tag for epigenetic transcriptional repression. Mainly functions in euchromatin regions, thereby playing a central role in the silencing of euchromatic genes. Required for cell proliferation, possibly by contributing to the maintenance of proper higher-order structure of DNA and chromosome condensation during mitosis. This Drosophila melanogaster (Fruit fly) protein is Histone-lysine N-methyltransferase Set8.